A 249-amino-acid chain; its full sequence is Esterase YjfP (249 aa).

Functionally, displays esterase activity toward palmitoyl-CoA and pNP-butyrate. The chain is Esterase YjfP (yjfP) from Escherichia coli (strain K12).